A 296-amino-acid polypeptide reads, in one-letter code: UDP-N-acetylenolpyruvoylglucosamine reductase (296 aa).

Positions 26 to 191 (RIGGPANYFK…LSATFRLSRN (166 aa)) constitute an FAD-binding PCMH-type domain. Arginine 170 is an active-site residue. Cysteine 218 serves as the catalytic Proton donor. The active site involves glutamate 287.

The protein belongs to the MurB family. Requires FAD as cofactor.

The protein resides in the cytoplasm. It carries out the reaction UDP-N-acetyl-alpha-D-muramate + NADP(+) = UDP-N-acetyl-3-O-(1-carboxyvinyl)-alpha-D-glucosamine + NADPH + H(+). It functions in the pathway cell wall biogenesis; peptidoglycan biosynthesis. In terms of biological role, cell wall formation. This Chlamydia abortus (strain DSM 27085 / S26/3) (Chlamydophila abortus) protein is UDP-N-acetylenolpyruvoylglucosamine reductase.